Reading from the N-terminus, the 525-residue chain is Nucleolar and spindle-associated protein 1-A (525 aa).

Disordered stretches follow at residues 46–205 (ESKD…LHEA), 248–292 (EKTP…RFSA), 373–397 (TPES…PEKA), and 451–525 (SLSR…VPVQ). Over residues 58-69 (SSLTDTDELNSS) the composition is skewed to polar residues. The segment covering 82-92 (THRRGRGRKPL) has biased composition (basic residues). Positions 106–127 (SVGTGTESLASETDNTQDQNCL) are enriched in polar residues. Basic and acidic residues predominate over residues 160–169 (TTEKRQKKAS). Positions 270 to 285 (PPTTGASPSRTPTNQR) are enriched in polar residues. A compositionally biased stretch (polar residues) spans 476 to 494 (CGSNNNVSVLKNNFKQPHL). Residues 495–514 (QTREDRRKQHEQDRKGKRDQ) show a composition bias toward basic and acidic residues.

The protein belongs to the NUSAP family. As to quaternary structure, interacts with DNA. Interacts with microtubules, ipo7, kpna2 and kpnb1. Microtubule stabilization is inhibited by ipo7 and kpna2, while microtubule bundling is inhibited by kpnb1. Active GTP-bound ran causes dissociation of ipo7 and kpnb1.

It localises to the cytoplasm. The protein resides in the nucleus. It is found in the cytoskeleton. Its subcellular location is the spindle. Microtubule-associated protein with the capacity to bundle and stabilize microtubules. May associate with chromosomes and promote the organization of meiotic or mitotic spindle microtubules around them. This Xenopus laevis (African clawed frog) protein is Nucleolar and spindle-associated protein 1-A (nusap1-a).